Reading from the N-terminus, the 286-residue chain is Bifunctional protein FolD (286 aa).

NADP(+) is bound by residues 165 to 167 (GRS), Ser190, and Val231.

This sequence belongs to the tetrahydrofolate dehydrogenase/cyclohydrolase family. Homodimer.

The catalysed reaction is (6R)-5,10-methylene-5,6,7,8-tetrahydrofolate + NADP(+) = (6R)-5,10-methenyltetrahydrofolate + NADPH. The enzyme catalyses (6R)-5,10-methenyltetrahydrofolate + H2O = (6R)-10-formyltetrahydrofolate + H(+). It functions in the pathway one-carbon metabolism; tetrahydrofolate interconversion. In terms of biological role, catalyzes the oxidation of 5,10-methylenetetrahydrofolate to 5,10-methenyltetrahydrofolate and then the hydrolysis of 5,10-methenyltetrahydrofolate to 10-formyltetrahydrofolate. This chain is Bifunctional protein FolD, found in Bacillus cytotoxicus (strain DSM 22905 / CIP 110041 / 391-98 / NVH 391-98).